The following is a 126-amino-acid chain: Protein Wnt-1 (126 aa).

The O-palmitoleoyl serine; by PORCN moiety is linked to residue S1. The cysteines at positions 92 and 107 are disulfide-linked. N93 and N94 each carry an N-linked (GlcNAc...) asparagine glycan.

The protein belongs to the Wnt family. Palmitoleoylation is required for efficient binding to frizzled receptors. Palmitoleoylation is necessary for proper trafficking to cell surface. Depalmitoleoylated by NOTUM, leading to inhibit Wnt signaling pathway.

Its subcellular location is the secreted. The protein localises to the extracellular space. The protein resides in the extracellular matrix. Its function is as follows. Ligand for members of the frizzled family of seven transmembrane receptors. Probable developmental protein. The protein is Protein Wnt-1 (WNT-1) of Alopias vulpinus (Common thresher shark).